Reading from the N-terminus, the 437-residue chain is Chromosomal replication initiator protein DnaA (437 aa).

Residues 1–69 form a domain I, interacts with DnaA modulators region; the sequence is MLGDTTLKQL…AHLFELSTGI (69 aa). A domain II region spans residues 69-100; that stretch reads IRPKIEIRLGSLKKDVKSSSPKAGVSKGQKST. The interval 101 to 315 is domain III, AAA+ region; it reads ILNPSFTFDS…GIIIKLNAYA (215 aa). Glycine 145, glycine 147, lysine 148, and threonine 149 together coordinate ATP. The domain IV, binds dsDNA stretch occupies residues 316–437; the sequence is NLMNQEITLQ…ELKNKIKSRN (122 aa).

Belongs to the DnaA family. In terms of assembly, oligomerizes as a right-handed, spiral filament on DNA at oriC.

It is found in the cytoplasm. Its function is as follows. Plays an essential role in the initiation and regulation of chromosomal replication. ATP-DnaA binds to the origin of replication (oriC) to initiate formation of the DNA replication initiation complex once per cell cycle. Binds the DnaA box (a 9 base pair repeat at the origin) and separates the double-stranded (ds)DNA. Forms a right-handed helical filament on oriC DNA; dsDNA binds to the exterior of the filament while single-stranded (ss)DNA is stabiized in the filament's interior. The ATP-DnaA-oriC complex binds and stabilizes one strand of the AT-rich DNA unwinding element (DUE), permitting loading of DNA polymerase. After initiation quickly degrades to an ADP-DnaA complex that is not apt for DNA replication. Binds acidic phospholipids. This Wolinella succinogenes (strain ATCC 29543 / DSM 1740 / CCUG 13145 / JCM 31913 / LMG 7466 / NCTC 11488 / FDC 602W) (Vibrio succinogenes) protein is Chromosomal replication initiator protein DnaA.